The sequence spans 1857 residues: U3 small nucleolar RNA-associated protein 10 (1857 aa).

Residues 267–287 (LTAYSIISVLSSLVPLSADLV) traverse the membrane as a helical segment. The stretch at 1817 to 1855 (LIPYIAELLEDDDEEVELEVRNGLVRVIENVLGEPLDRY) is one HEAT repeat.

The protein belongs to the HEATR1/UTP10 family. In terms of assembly, component of the ribosomal small subunit (SSU) processome.

It localises to the nucleus. It is found in the nucleolus. The protein resides in the membrane. Functionally, involved in nucleolar processing of pre-18S ribosomal RNA. Involved in ribosome biosynthesis. This chain is U3 small nucleolar RNA-associated protein 10, found in Debaryomyces hansenii (strain ATCC 36239 / CBS 767 / BCRC 21394 / JCM 1990 / NBRC 0083 / IGC 2968) (Yeast).